The following is a 161-amino-acid chain: V-type proton ATPase 16 kDa proteolipid subunit c 2 (161 aa).

Residues 1-15 lie on the Lumenal side of the membrane; it reads MSYDLETAEHAAYAP. The helical transmembrane segment at 16–36 threads the bilayer; it reads FFGYMGAASAQIFTVLGAAYG. Topologically, residues 37–58 are cytoplasmic; the sequence is TAKSAVGICSMGVMRPELIMKS. The chain crosses the membrane as a helical span at residues 59-79; it reads VIPVIMAGIIGIYGLVVAMVL. Topologically, residues 80 to 98 are lumenal; sequence KGKVQAASAGYDLNKGFAH. The chain crosses the membrane as a helical span at residues 99 to 119; that stretch reads LAAGLTCGLCGLGAGYAIGIV. Residues 120–137 lie on the Cytoplasmic side of the membrane; sequence GDAGVRGTAQQPRLFVGM. The chain crosses the membrane as a helical span at residues 138–158; it reads ILILIFSEVLGLYGMIVALIL. Topologically, residues 159–161 are lumenal; the sequence is GTS.

Belongs to the V-ATPase proteolipid subunit family. V-ATPase is a heteromultimeric enzyme made up of two complexes: the ATP-hydrolytic V1 complex and the proton translocation V0 complex. The V1 complex consists of three catalytic AB heterodimers that form a heterohexamer, three peripheral stalks each consisting of EG heterodimers, one central rotor including subunits D and F, and the regulatory subunits C and H. The proton translocation complex V0 consists of the proton transport subunit a, a ring of proteolipid subunits c9c'', rotary subunit d, subunits e and f, and the accessory subunits vah-19/Ac45 and vah-20/PRR.

It is found in the membrane. Its function is as follows. Proton-conducting pore forming subunit of the V0 complex of vacuolar(H+)-ATPase (V-ATPase), a multisubunit enzyme composed of a peripheral complex (V1) that hydrolyzes ATP and a membrane integral complex (V0) that translocates protons. V-ATPase is responsible for acidifying and maintaining the pH of intracellular compartments and in some cell types, is targeted to the plasma membrane, where it is responsible for acidifying the extracellular environment. Involved in necrotic cell death. Required along with other vacuolar ATPase components for the removal of protein aggregates which form in immature oocytes in the distal gonad. This removal occurs as the oocytes mature and move to the proximal gonad, is triggered by the introduction of sperm through mating and occurs before fertilization. The introduction of sperm triggers V-ATPase accumulation in proximal oocytes and induces lysosomal acidification which leads to engulfing of protein aggregates by lysosomes and subsequent clearance of the aggregates. Lysosomal acidification also leads to changes in mitochondrial morphology and function. Mitochondria in distal immature oocytes are fragmented, produce high levels of reactive oxygen species (ROS) and have high membrane potential, indicative of metabolic inactivity. In contrast, mitochondria in proximal mature oocytes are tubular with lower ROS levels and membrane potential, indicative of an active metabolic state required for aggregate mobilization before clearance. This Caenorhabditis briggsae protein is V-type proton ATPase 16 kDa proteolipid subunit c 2.